Consider the following 314-residue polypeptide: Acetyl-coenzyme A carboxylase carboxyl transferase subunit beta (314 aa).

Positions 37-307 (LWQKCPACDT…MSLPSIDSEA (271 aa)) constitute a CoA carboxyltransferase N-terminal domain. 4 residues coordinate Zn(2+): C41, C44, C60, and C63. The segment at 41-63 (CPACDTLTYTKDLQQNWQVCPSC) adopts a C4-type zinc-finger fold.

This sequence belongs to the AccD/PCCB family. In terms of assembly, acetyl-CoA carboxylase is a heterohexamer composed of biotin carboxyl carrier protein (AccB), biotin carboxylase (AccC) and two subunits each of ACCase subunit alpha (AccA) and ACCase subunit beta (AccD). Zn(2+) is required as a cofactor.

It localises to the cytoplasm. The catalysed reaction is N(6)-carboxybiotinyl-L-lysyl-[protein] + acetyl-CoA = N(6)-biotinyl-L-lysyl-[protein] + malonyl-CoA. The protein operates within lipid metabolism; malonyl-CoA biosynthesis; malonyl-CoA from acetyl-CoA: step 1/1. Its function is as follows. Component of the acetyl coenzyme A carboxylase (ACC) complex. Biotin carboxylase (BC) catalyzes the carboxylation of biotin on its carrier protein (BCCP) and then the CO(2) group is transferred by the transcarboxylase to acetyl-CoA to form malonyl-CoA. The chain is Acetyl-coenzyme A carboxylase carboxyl transferase subunit beta from Synechococcus sp. (strain JA-2-3B'a(2-13)) (Cyanobacteria bacterium Yellowstone B-Prime).